Here is a 255-residue protein sequence, read N- to C-terminus: Ribonuclease HII (255 aa).

An RNase H type-2 domain is found at 72 to 255 (AIICGIDEVG…KSFEPIKSLL (184 aa)). Positions 78, 79, and 170 each coordinate a divalent metal cation.

The protein belongs to the RNase HII family. Mn(2+) is required as a cofactor. Requires Mg(2+) as cofactor.

It localises to the cytoplasm. The enzyme catalyses Endonucleolytic cleavage to 5'-phosphomonoester.. Its function is as follows. Endonuclease that specifically degrades the RNA of RNA-DNA hybrids. The chain is Ribonuclease HII from Staphylococcus aureus (strain MSSA476).